We begin with the raw amino-acid sequence, 692 residues long: Follicle-stimulating hormone receptor (692 aa).

Residues 1-17 form the signal peptide; sequence MALLLVSLLAFLGTGSG. 2 disulfides stabilise this stretch: Cys18–Cys25 and Cys23–Cys32. Residues 18-46 form the LRRNT domain; sequence CHHWLCHCSNRVFLCQDSKVTEIPTDLPR. Over 18–365 the chain is Extracellular; the sequence is CHHWLCHCSN…EDIMGYNILR (348 aa). 9 LRR repeats span residues 49–72, 73–97, 98–118, 119–143, 144–169, 170–192, 193–216, 217–240, and 241–259; these read IELR…FGDL, EKIE…LPKL, HEIR…AFQN, LPSL…KIQS, LQKV…MGLS, FESV…AFNG, TQLD…VFQG, ASGP…GLEN, and LKKL…PNLD. N-linked (GlcNAc...) asparagine glycans are attached at residues Asn191 and Asn199. 4 disulfide bridges follow: Cys275/Cys345, Cys276/Cys292, Cys276/Cys355, and Cys292/Cys337. An N-linked (GlcNAc...) asparagine glycan is attached at Asn293. Tyr334 carries the sulfotyrosine modification. A helical membrane pass occupies residues 366–386; sequence VLIWFISILAITGNTTVLVVL. The Cytoplasmic portion of the chain corresponds to 387 to 397; that stretch reads TTSQYKLTVPR. The chain crosses the membrane as a helical span at residues 398 to 420; the sequence is FLMCNLAFADLCIGIYLLLIASV. Residues 421 to 442 lie on the Extracellular side of the membrane; it reads DIHTKSQYHNYAIDWQTGAGCD. A disulfide bond links Cys441 and Cys516. The chain crosses the membrane as a helical span at residues 443–464; that stretch reads AAGFFTVFASELSVYTLTAITL. Residues 465–484 are Cytoplasmic-facing; it reads ERWHTITHAMQLECKVQLRH. A helical transmembrane segment spans residues 485-507; that stretch reads AASVMVLGWTFAFAAALFPIFGI. Topologically, residues 508–527 are extracellular; that stretch reads SSYMKVSICLPMDIDSPLSQ. A helical transmembrane segment spans residues 528-549; it reads LYVMALLVLNVLAFVVICGCYT. The Cytoplasmic segment spans residues 550 to 572; the sequence is HIYLTVRNPTIVSSSSDTKIAKR. The chain crosses the membrane as a helical span at residues 573–596; it reads MATLIFTDFLCMAPISFFAISASL. The Extracellular portion of the chain corresponds to 597–607; the sequence is KVPLITVSKAK. Residues 608–629 traverse the membrane as a helical segment; it reads ILLVLFYPINSCANPFLYAIFT. Over 630-692 the chain is Cytoplasmic; sequence KNFRRDFFIL…LVPLNHSSQN (63 aa).

Belongs to the G-protein coupled receptor 1 family. FSH/LSH/TSH subfamily. Homotrimer. Functions as a homotrimer binding the FSH hormone heterodimer composed of CGA and FSHB. Interacts with ARRB2. Interacts with APPL2; interaction is independent of follicle stimulating hormone stimulation. In terms of processing, N-glycosylated; indirectly required for FSH-binding, possibly via a conformational change that allows high affinity binding of hormone. Sulfated. As to expression, sertoli cells and ovarian granulosa cells.

It localises to the cell membrane. Functionally, g protein-coupled receptor for follitropin, the follicle-stimulating hormone. Through cAMP production activates the downstream PI3K-AKT and ERK1/ERK2 signaling pathways. This is Follicle-stimulating hormone receptor (Fshr) from Rattus norvegicus (Rat).